The sequence spans 549 residues: Probable protein kinase UbiB (549 aa).

In terms of domain architecture, Protein kinase spans 123–501 (DFNETPLASA…QQQAHKSNYL (379 aa)). Residues 129-137 (LASASISQV) and K152 each bind ATP. D287 (proton acceptor) is an active-site residue. 2 consecutive transmembrane segments (helical) span residues 498–518 (SNYLLITSAILLICGTLLFNQ) and 520–540 (ATLLSPYVCLISGAVLWIIGW).

It belongs to the ABC1 family. UbiB subfamily.

The protein resides in the cell inner membrane. Its pathway is cofactor biosynthesis; ubiquinone biosynthesis [regulation]. Functionally, is probably a protein kinase regulator of UbiI activity which is involved in aerobic coenzyme Q (ubiquinone) biosynthesis. This Shewanella oneidensis (strain ATCC 700550 / JCM 31522 / CIP 106686 / LMG 19005 / NCIMB 14063 / MR-1) protein is Probable protein kinase UbiB.